A 447-amino-acid polypeptide reads, in one-letter code: Phosphoglucosamine mutase (447 aa).

The Phosphoserine intermediate role is filled by S104. Residues S104, D243, D245, and D247 each contribute to the Mg(2+) site. A Phosphoserine modification is found at S104.

It belongs to the phosphohexose mutase family. The cofactor is Mg(2+). Post-translationally, activated by phosphorylation.

The catalysed reaction is alpha-D-glucosamine 1-phosphate = D-glucosamine 6-phosphate. Catalyzes the conversion of glucosamine-6-phosphate to glucosamine-1-phosphate. This is Phosphoglucosamine mutase from Corynebacterium glutamicum (strain ATCC 13032 / DSM 20300 / JCM 1318 / BCRC 11384 / CCUG 27702 / LMG 3730 / NBRC 12168 / NCIMB 10025 / NRRL B-2784 / 534).